The chain runs to 1065 residues: DNA ligase 4 (1065 aa).

Positions 1-20 (MAVHAPYNHAPPPTQEINGQ) are disordered. The ATP site is built by Glu-295, Lys-297, Leu-298, Arg-302, Glu-357, Phe-387, Glu-452, Lys-457, Lys-474, and Lys-476. Catalysis depends on Lys-297, which acts as the N6-AMP-lysine intermediate. Position 357 (Glu-357) interacts with Mg(2+). Glu-452 is a binding site for Mg(2+). Positions 696 to 775 (VETSIFSDMT…TALPFLKEFL (80 aa)) constitute a BRCT 1 domain. The interval 825 to 928 (GEDKDEIDVE…SDVGVNGDDY (104 aa)) is disordered. Basic and acidic residues-rich tracts occupy residues 834-864 (EESRESKNRRMAREDLKEKESNRTLEQKKLQ) and 886-900 (MSLKEESDTDSERSR). One can recognise a BRCT 2 domain in the interval 954-1064 (DEDRIFYHLA…TLLDEDLYKP (111 aa)).

This sequence belongs to the ATP-dependent DNA ligase family. It depends on Mg(2+) as a cofactor.

The protein resides in the nucleus. The enzyme catalyses ATP + (deoxyribonucleotide)n-3'-hydroxyl + 5'-phospho-(deoxyribonucleotide)m = (deoxyribonucleotide)n+m + AMP + diphosphate.. Functionally, DNA ligase involved in DNA non-homologous end joining (NHEJ); required for double-strand break (DSB) repair. In Cryptococcus neoformans var. neoformans serotype D (strain B-3501A) (Filobasidiella neoformans), this protein is DNA ligase 4 (LIG4).